The following is a 180-amino-acid chain: Lipid droplet coating protein Cap20 (180 aa).

The protein belongs to the perilipin family. In terms of assembly, interacts with class I hydrophobin Hydr1. Interacts also with the cAMP-dependent protein kinase catalytic subunit PkaC1.

Its subcellular location is the lipid droplet. Lipid droplet coating protein that regulates lipid metabolism, appressorial turgor pressure, and virulence. Mature appressoria with high turgor pressure are essential to penetrate the leaf surface. This Colletotrichum siamense (Anthracnose fungus) protein is Lipid droplet coating protein Cap20.